Consider the following 98-residue polypeptide: Putative protein adenylyltransferase MJ0128 (98 aa).

The GSX(10)DXD motif motif lies at 31-45 (GSYARNEQTEKSDID). Asp43, Asp45, and Asp75 together coordinate Mg(2+).

It belongs to the MntA antitoxin family. As to quaternary structure, probably forms a complex with cognate toxin MJ0127. The cofactor is Mg(2+).

It carries out the reaction L-tyrosyl-[protein] + ATP = O-(5'-adenylyl)-L-tyrosyl-[protein] + diphosphate. The catalysed reaction is O-(5'-adenylyl)-L-tyrosyl-[protein] + ATP = O-[5'-(adenylyl-(5'-&gt;3')-adenylyl)]-L-tyrosyl-[protein] + diphosphate. In terms of biological role, probable antitoxin component of a putative type VII toxin-antitoxin (TA) system. Neutralizes cognate toxic MJ0127 by di-AMPylation. The sequence is that of Putative protein adenylyltransferase MJ0128 from Methanocaldococcus jannaschii (strain ATCC 43067 / DSM 2661 / JAL-1 / JCM 10045 / NBRC 100440) (Methanococcus jannaschii).